Here is a 124-residue protein sequence, read N- to C-terminus: Insulin-like growth factor 1 (124 aa).

A propeptide spanning residues 1 to 19 (IHFFYLGLCLLTLTSSAAA) is cleaved from the precursor. Residues 20 to 48 (GPETLCGAELVDALQFVCGDRGFYFSKPT) are b. Cystine bridges form between cysteine 25-cysteine 67, cysteine 37-cysteine 80, and cysteine 66-cysteine 71. The segment at 49 to 60 (GYGSSSRRLHHK) is c. An a region spans residues 61–81 (GIVDECCFQSCDLRRLEMYCA). The d stretch occupies residues 82 to 89 (PIKPPKSA). A disordered region spans residues 86-124 (PKSARSVRAQRHTDMPKAQKEVHLKNTSRGNTGNRNYRM). The propeptide at 90–124 (RSVRAQRHTDMPKAQKEVHLKNTSRGNTGNRNYRM) is e peptide. Over residues 96–109 (RHTDMPKAQKEVHL) the composition is skewed to basic and acidic residues. The segment covering 110-124 (KNTSRGNTGNRNYRM) has biased composition (polar residues).

The protein belongs to the insulin family.

The protein resides in the secreted. In terms of biological role, the insulin-like growth factors, isolated from plasma, are structurally and functionally related to insulin but have a much higher growth-promoting activity. Acts as a ligand for IGF1R. Binds to the alpha subunit of IGF1R, leading to the activation of the intrinsic tyrosine kinase activity which autophosphorylates tyrosine residues in the beta subunit thus initiatiating a cascade of down-stream signaling events leading to activation of the PI3K-AKT/PKB and the Ras-MAPK pathways. Binds to integrins. Its binding to integrins and subsequent ternary complex formation with integrins and IGFR1 are essential for IGF1 signaling. The protein is Insulin-like growth factor 1 of Coturnix japonica (Japanese quail).